A 662-amino-acid chain; its full sequence is ATP-dependent RNA helicase DDX3X (662 aa).

Ser-2 carries the N-acetylserine modification. The interval Ser-2 to Pro-139 is required for TBK1 and IKBKE-dependent IFNB1 activation. The Nuclear export signal signature appears at Leu-12–Leu-21. Residues Leu-19–Glu-144 form a disordered region. A compositionally biased stretch (polar residues) spans Leu-21–Ser-34. The tract at residues Tyr-38–Arg-44 is interaction with EIF4E. Basic and acidic residues predominate over residues Arg-44–Ala-68. Residue Lys-55 is modified to N6-acetyllysine. Over residues Ser-70 to Gly-89 the composition is skewed to low complexity. The interaction with VACV protein K7 stretch occupies residues Lys-81–Ser-90. Phosphoserine occurs at positions 82, 86, and 90. The segment at Arg-88–Gly-123 is involved in binding to RNA G-quadruplex. The span at Gly-94–Lys-130 shows a compositional bias: basic and acidic residues. The interval Gly-100–Arg-110 is interaction with IKBKE. The segment at Gly-100–Asn-662 is interaction with GSK3B. Arg-101 carries the post-translational modification Omega-N-methylarginine. Phosphoserine; by IKKE is present on Ser-102. Tyr-104 carries the post-translational modification Phosphotyrosine. The residue at position 110 (Arg-110) is an Omega-N-methylarginine. At Lys-118 the chain carries N6-acetyllysine. Ser-131 is subject to Phosphoserine. The tract at residues Pro-139–Gly-172 is interaction with CHUK. Residues Glu-180–Lys-208 carry the Q motif motif. Position 181 is a phosphoserine; by TBK1; in vitro (Ser-181). Residue Ser-183 is modified to Phosphoserine; by TBK1. Tyr-200–Gln-207 contributes to the ATP binding site. The 193-residue stretch at Ile-211–Leu-403 folds into the Helicase ATP-binding domain. A Glycyl lysine isopeptide (Lys-Gly) (interchain with G-Cter in SUMO2) cross-link involves residue Lys-215. Ala-224–Thr-231 is an ATP binding site. A Phosphoserine; by TBK1; in vitro modification is found at Ser-240. The segment at Ala-250–Arg-259 is involved in stimulation of ATPase activity by DNA and RNA, nucleic acid binding and unwinding and HIV-1 replication. Ser-269 carries the phosphoserine; by TBK1; in vitro modification. The DEAD box signature appears at Asp-347–Asp-350. Residues Gly-409–Asn-662 are interaction with HCV core protein. A Helicase C-terminal domain is found at Asn-414–Ala-575. Ser-429 carries the post-translational modification Phosphoserine; by CSNK1E and TBK1; in vitro. Thr-438 is subject to Phosphothreonine; by TBK1; in vitro. Ser-442 and Ser-456 each carry phosphoserine; by TBK1; in vitro. Thr-469 bears the Phosphothreonine; by CSNK1E; in vitro mark. Ser-470 bears the Phosphoserine; by CSNK1E; in vitro mark. Position 520 is a phosphoserine; by TBK1; in vitro (Ser-520). The tract at residues Gly-536 to Gly-661 is interaction with NXF1. Thr-542 is subject to Phosphothreonine; by TBK1; in vitro. The residue at position 543 (Ser-543) is a Phosphoserine; by CSNK1E and TBK1; in vitro. At Arg-592 the chain carries Omega-N-methylarginine. Phosphoserine occurs at positions 594, 605, and 612. Residues Asp-601 to Phe-634 are disordered. Residues Gln-604–Arg-622 are compositionally biased toward low complexity. An omega-N-methylarginine mark is found at Arg-617 and Arg-632. Over residues Ser-623–Phe-634 the composition is skewed to gly residues.

Belongs to the DEAD box helicase family. DDX3/DED1 subfamily. Homodimer; can bind RNA as a monomer and as a dimer/oligomer. Interacts with TDRD3. Interacts (when phosphorylated at Ser-102) with IRF3; the interaction facilitates the phosphorylation and activation of IRF3 by IKBKE. Directly interacts with XPO1/CRM1. The interaction with XPO1/CMR1 is dependent on the DDX3X nuclear export signal motif and XPO1 interaction with GTPase RAN in its active GTP-bound form. Weakly interacts with TBKBP1/SINTBAD. Directly interacts with TRAF3; this interaction stimulates TRAF3 'Lys-63' ubiquitination. Interacts with CSNK1E in a Wnt-dependent manner; this interaction greatly enhances CSNK1E affinity for ATP, stimulates its kinase activity and promotes CSNK1E-mediated DVL2 phosphorylation. In the presence of RNA, the interaction is decreased. Also interacts with CSNK1D and stimulates its kinase activity. Interacts with TRPV4; this interaction is decreased when the TRPV4 channel is activated, leading to DDX3X relocalization to the nucleus. Interacts with MAP3K14/NIK. Directly interacts with CHUK/IKKA after physiological activation of the TLR7 and TLR8 pathways; this interaction enhances CHUK autophosphorylation. May associate with EIF4F complex, composed of at least EIF4A, EIF4E and EIF4G1/EIF4G3. Directly interacts with EIF4E in an RNA-independent manner; this interaction enhances EIF4E cap-binding ability. Directly interacts with EIF4G1 in an RNA-independent manner. DDX3X competes with EIF4G1 for interaction with EIF4E. Interacts with EIF4A1 and EIF2S1 in an RNA-independent manner. Associates with the eukaryotic translation initiation factor 3 (eIF-3) complex, including with EIF3B and EIF3C subunits. Directly interacts with IKBKE/IKKE; this interaction stimulates IKBKE activating autophosphorylation and is induced upon viral infection. Interacts with TBK1. Interacts with SP1; this interaction potentiates SP1-induced CDKN1A/WAF1/CIP1 transcription. Interacts with GSK3A and GSK3B. Interacts with several death receptors, inclusing FAS, TNFRSF10A and TNFRSF10B. Recruited to TNFRSF10B in the absence of receptor stimulation. When TNFRSF10B is stimulated, further recruited to the receptor and cleaved by caspases. A large proteolytic fragment remains associated with TNFRSF10B. Interacts (via C-terminus) with NXF1/TAP; this interaction may be partly involved in DDX3X nuclear export and in NXF1 localization to stress granules. Identified in an mRNP complex, composed of at least DHX9, DDX3X, ELAVL1, HNRNPU, IGF2BP1/2, ILF3, PABPC1, PCBP2, PTBP2, STAU1, STAU2, SYNCRIP and YBX1. The interaction with IGF2BP1/2 is RNA-dependent. Directly interacts with PABPC1/PABP1 in an RNA-independent manner. This interaction increases in stressed cells and decreases during cell recovery. Interacts (via C-terminus) with MAVS/IPS-1; this interaction occurs rapidly, but transiently after Sendai virus infection. The interaction potentiates MAVS-mediated IFNB induction. Interacts with ERCC6/CBS. Interacts with DHX33 in an RNA-independent manner. Interacts with DDX5 in the cytoplasm; this interaction may be more efficient when both proteins are unphosphorylated. Interacts with RIGI/RIG-1. Interacts with IFIH1/MDA5. Interacts with NCAPH; this interaction may be important for the NCAPH localization at condensing chromosomes during mitosis. Interacts with NLRP3 (via NACHT domain) under inflammasome-activating conditions. Interacts with CAPRIN1. Interacts with HNF4A and NR0B2/SHP in an RNA-independent manner; this interaction disrupts the interaction between HNF4 and NR0B2 that forms inactive heterodimers and enhances the formation of active HNF4 homodimers. Interacts with CREBBP/CBP. Interacts with EP300/p300. Interacts with gamma-tubulin. Interacts with phosphorylated TP53. Directly interacts with RELA/p65; this interaction may trap RELA in the cytoplasm, impairing nuclear relocalization upon TNF activating signals. As to quaternary structure, (Microbial infection) Interacts with hepatitis B virus (HBV) polymerase in the cytoplasm; this interaction may inhibit DDX3X interaction with the IKBKE/TBK1 complex, and hence impair IKBKE/TBK1-mediated increase in IFNB production. In terms of assembly, (Microbial infection) Directly interacts with hepatitis C virus (HCV) core protein in the cytoplasm. (Microbial infection) Interacts with vaccinia virus (VACV) protein K7. As to quaternary structure, (Microbial infection) Interacts with HIV-1 protein Rev. In terms of assembly, (Microbial infection) Interacts with Venezuelan equine encephalitis virus non-structural protein 3. Post-translationally, phosphorylated by TBK1; the phosphorylation is required for the synergistic induction of IFNB mediated by TBK1 and DDX3X. Phosphorylated by IKBKE at Ser-102 after ssRNA viral infection; enhances the induction of INFB promoter by IRF3. The cytoplasmic form is highly phosphorylated in the G1/S phase of the cell cycle and much less at G2/M. Phosphorylation by CSNK1E may inhibit RNA-stimulated ATPase activity. Upon stimulation of death receptors, including TNFRSF10B, recruited to receptors and cleaved by caspases. Proteolytic fragments remain associated with the receptors. This cleavage presumably inactivates DDX3X anti-apoptotic function. In terms of processing, ubiquitinated by RNF39 via 'Lys-48'-linked ubiquitination; leading to proteasomal degradation. In terms of tissue distribution, widely expressed. In testis, expressed in spermatids. Expressed in epidermis and liver (at protein level).

Its subcellular location is the cell membrane. The protein resides in the nucleus. It localises to the cytoplasm. It is found in the stress granule. The protein localises to the inflammasome. Its subcellular location is the cell projection. The protein resides in the lamellipodium. It localises to the cytoskeleton. It is found in the microtubule organizing center. The protein localises to the centrosome. It catalyses the reaction ATP + H2O = ADP + phosphate + H(+). Its function is as follows. Multifunctional ATP-dependent RNA helicase. The ATPase activity can be stimulated by various ribo-and deoxynucleic acids indicative for a relaxed substrate specificity. In vitro can unwind partially double-stranded DNA with a preference for 5'-single-stranded DNA overhangs. Binds RNA G-quadruplex (rG4s) structures, including those located in the 5'-UTR of NRAS mRNA. Involved in many cellular processes, which do not necessarily require its ATPase/helicase catalytic activities. Involved in transcription regulation. Positively regulates CDKN1A/WAF1/CIP1 transcription in an SP1-dependent manner, hence inhibits cell growth. This function requires its ATPase, but not helicase activity. CDKN1A up-regulation may be cell-type specific. Binds CDH1/E-cadherin promoter and represses its transcription. Potentiates HNF4A-mediated MTTP transcriptional activation; this function requires ATPase, but not helicase activity. Facilitates HNF4A acetylation, possibly catalyzed by CREBBP/EP300, thereby increasing the DNA-binding affinity of HNF4 to its response element. In addition, disrupts the interaction between HNF4 and SHP that forms inactive heterodimers and enhances the formation of active HNF4 homodimers. By promoting HNF4A-induced MTTP expression, may play a role in lipid homeostasis. May positively regulate TP53 transcription. Associates with mRNPs, predominantly with spliced mRNAs carrying an exon junction complex (EJC). Involved in the regulation of translation initiation. Not involved in the general process of translation, but promotes efficient translation of selected complex mRNAs, containing highly structured 5'-untranslated regions (UTR). This function depends on helicase activity. Might facilitate translation by resolving secondary structures of 5'-UTRs during ribosome scanning. Alternatively, may act prior to 43S ribosomal scanning and promote 43S pre-initiation complex entry to mRNAs exhibiting specific RNA motifs, by performing local remodeling of transcript structures located close to the cap moiety. Independently of its ATPase activity, promotes the assembly of functional 80S ribosomes and disassembles from ribosomes prior to the translation elongation process. Positively regulates the translation of cyclin E1/CCNE1 mRNA and consequently promotes G1/S-phase transition during the cell cycle. May activate TP53 translation. Required for endoplasmic reticulum stress-induced ATF4 mRNA translation. Independently of its ATPase/helicase activity, enhances IRES-mediated translation; this activity requires interaction with EIF4E. Independently of its ATPase/helicase activity, has also been shown specifically repress cap-dependent translation, possibly by acting on translation initiation factor EIF4E. Involved in innate immunity, acting as a viral RNA sensor. Binds viral RNAs and promotes the production of type I interferon (IFN-alpha and IFN-beta). Potentiate MAVS/RIGI-mediated induction of IFNB in early stages of infection. Enhances IFNB1 expression via IRF3/IRF7 pathway and participates in NFKB activation in the presence of MAVS and TBK1. Involved in TBK1 and IKBKE-dependent IRF3 activation leading to IFNB induction, acts as a scaffolding adapter that links IKBKE and IRF3 and coordinates their activation. Involved in the TLR7/TLR8 signaling pathway leading to type I interferon induction, including IFNA4 production. In this context, acts as an upstream regulator of IRF7 activation by MAP3K14/NIK and CHUK/IKKA. Stimulates CHUK autophosphorylation and activation following physiological activation of the TLR7 and TLR8 pathways, leading to MAP3K14/CHUK-mediated activatory phosphorylation of IRF7. Also stimulates MAP3K14/CHUK-dependent NF-kappa-B signaling. Negatively regulates TNF-induced IL6 and IL8 expression, via the NF-kappa-B pathway. May act by interacting with RELA/p65 and trapping it in the cytoplasm. May also bind IFNB promoter; the function is independent of IRF3. Involved in both stress and inflammatory responses. Independently of its ATPase/helicase activity, required for efficient stress granule assembly through its interaction with EIF4E, hence promotes survival in stressed cells. Independently of its helicase activity, regulates NLRP3 inflammasome assembly through interaction with NLRP3 and hence promotes cell death by pyroptosis during inflammation. This function is independent of helicase activity. Therefore DDX3X availability may be used to interpret stress signals and choose between pro-survival stress granules and pyroptotic NLRP3 inflammasomes and serve as a live-or-die checkpoint in stressed cells. In association with GSK3A/B, negatively regulates extrinsic apoptotic signaling pathway via death domain receptors, including TNFRSF10B, slowing down the rate of CASP3 activation following death receptor stimulation. Cleavage by caspases may inactivate DDX3X and relieve the inhibition. Independently of its ATPase/helicase activity, allosteric activator of CSNK1E. Stimulates CSNK1E-mediated phosphorylation of DVL2, thereby involved in the positive regulation of Wnt/beta-catenin signaling pathway. Also activates CSNK1A1 and CSNK1D in vitro, but it is uncertain if these targets are physiologically relevant. ATPase and casein kinase-activating functions are mutually exclusive. May be involved in mitotic chromosome segregation. In terms of biological role, (Microbial infection) Facilitates hepatitis C virus (HCV) replication. During infection, HCV core protein inhibits the interaction between MAVS and DDX3X and therefore impairs MAVS-dependent INFB induction and might recruit DDX3X to HCV replication complex. Functionally, (Microbial infection) Facilitates HIV-1 replication. Acts as a cofactor for XPO1-mediated nuclear export of HIV-1 Rev RNAs. This function is strongly stimulated in the presence of TBK1 and requires DDX3X ATPase activity. (Microbial infection) Facilitates Zika virus (ZIKV) replication. Its function is as follows. (Microbial infection) Facilitates Dengue virus (DENV) replication. In terms of biological role, (Microbial infection) Facilitates Venezuelan equine encephalitis virus (VEEV) replication. This Homo sapiens (Human) protein is ATP-dependent RNA helicase DDX3X (DDX3X).